A 312-amino-acid polypeptide reads, in one-letter code: Methionyl-tRNA formyltransferase (312 aa).

Residue 110 to 113 coordinates (6S)-5,6,7,8-tetrahydrofolate; it reads SLLP.

The protein belongs to the Fmt family.

It carries out the reaction L-methionyl-tRNA(fMet) + (6R)-10-formyltetrahydrofolate = N-formyl-L-methionyl-tRNA(fMet) + (6S)-5,6,7,8-tetrahydrofolate + H(+). Its function is as follows. Attaches a formyl group to the free amino group of methionyl-tRNA(fMet). The formyl group appears to play a dual role in the initiator identity of N-formylmethionyl-tRNA by promoting its recognition by IF2 and preventing the misappropriation of this tRNA by the elongation apparatus. The sequence is that of Methionyl-tRNA formyltransferase from Mycobacterium marinum (strain ATCC BAA-535 / M).